The following is a 78-amino-acid chain: Acyl carrier protein (78 aa).

A Carrier domain is found at 2–77 (SDIEQRVKQA…SAIDYVTKKL (76 aa)). Ser-37 carries the O-(pantetheine 4'-phosphoryl)serine modification.

This sequence belongs to the acyl carrier protein (ACP) family. 4'-phosphopantetheine is transferred from CoA to a specific serine of apo-ACP by AcpS. This modification is essential for activity because fatty acids are bound in thioester linkage to the sulfhydryl of the prosthetic group.

Its subcellular location is the cytoplasm. Its pathway is lipid metabolism; fatty acid biosynthesis. Functionally, carrier of the growing fatty acid chain in fatty acid biosynthesis. This chain is Acyl carrier protein, found in Acinetobacter baumannii (strain AB307-0294).